Consider the following 33-residue polypeptide: Beta-amanitin proprotein (33 aa).

Residues Met-1–Pro-10 constitute a propeptide that is removed on maturation. Positions Ile-11–Pro-18 form a cross-link, cyclopeptide (Ile-Pro). The 2'-cysteinyl-6'-hydroxytryptophan sulfoxide (Trp-Cys) cross-link spans Trp-12–Cys-16. Residues Cys-19–Ala-33 constitute a propeptide that is removed on maturation.

This sequence belongs to the MSDIN fungal toxin family. In terms of processing, processed by the macrocyclase-peptidase enzyme POPB to yield a toxic cyclic decapeptide. POPB first removes 10 residues from the N-terminus. Conformational trapping of the remaining peptide forces the enzyme to release this intermediate rather than proceed to macrocyclization. The enzyme rebinds the remaining peptide in a different conformation and catalyzes macrocyclization of the N-terminal 8 residues.

Toxin belonging to the bicyclic octapeptides amatoxins that acts by binding non-competitively to RNA polymerase II and greatly slowing the elongation of transcripts from target promoters. The protein is Beta-amanitin proprotein of Amanita pallidorosea.